The chain runs to 63 residues: Large ribosomal subunit protein uL29 (63 aa).

It belongs to the universal ribosomal protein uL29 family.

The protein is Large ribosomal subunit protein uL29 of Shewanella loihica (strain ATCC BAA-1088 / PV-4).